A 236-amino-acid chain; its full sequence is Purine nucleoside phosphorylase DeoD-type (236 aa).

His5 serves as a coordination point for a purine D-ribonucleoside. Phosphate contacts are provided by residues Gly21, Arg25, Arg44, and 88–91 (RVGT). A purine D-ribonucleoside-binding positions include 180 to 182 (EME) and 204 to 205 (SD). Asp205 acts as the Proton donor in catalysis.

The protein belongs to the PNP/UDP phosphorylase family. As to quaternary structure, homohexamer; trimer of homodimers.

The catalysed reaction is a purine D-ribonucleoside + phosphate = a purine nucleobase + alpha-D-ribose 1-phosphate. The enzyme catalyses a purine 2'-deoxy-D-ribonucleoside + phosphate = a purine nucleobase + 2-deoxy-alpha-D-ribose 1-phosphate. Functionally, catalyzes the reversible phosphorolytic breakdown of the N-glycosidic bond in the beta-(deoxy)ribonucleoside molecules, with the formation of the corresponding free purine bases and pentose-1-phosphate. This Shewanella baltica (strain OS223) protein is Purine nucleoside phosphorylase DeoD-type.